A 114-amino-acid polypeptide reads, in one-letter code: Iron-sulfur cluster insertion protein ErpA (114 aa).

Residues Cys-42, Cys-106, and Cys-108 each coordinate iron-sulfur cluster.

It belongs to the HesB/IscA family. As to quaternary structure, homodimer. The cofactor is iron-sulfur cluster.

Its function is as follows. Required for insertion of 4Fe-4S clusters for at least IspG. This is Iron-sulfur cluster insertion protein ErpA from Hamiltonella defensa subsp. Acyrthosiphon pisum (strain 5AT).